A 203-amino-acid polypeptide reads, in one-letter code: Recombination protein RecR (203 aa).

The C4-type zinc-finger motif lies at 56–71; it reads CSVCGNVSDEERCRIC. Residues 79 to 179 form the Toprim domain; that stretch reads SLVCVVEEPK…TVTRIASGLP (101 aa).

It belongs to the RecR family.

May play a role in DNA repair. It seems to be involved in an RecBC-independent recombinational process of DNA repair. It may act with RecF and RecO. This is Recombination protein RecR from Mycolicibacterium smegmatis (strain ATCC 700084 / mc(2)155) (Mycobacterium smegmatis).